A 234-amino-acid chain; its full sequence is Interleukin-27 subunit alpha (234 aa).

The signal sequence occupies residues M1–G28. N85 carries an N-linked (GlcNAc...) asparagine glycan. Residues K160 to G185 form a disordered region. Residues E161–E174 show a composition bias toward acidic residues.

This sequence belongs to the IL-6 superfamily. Heterodimer with EBI3; not disulfide-linked. This heterodimer is known as interleukin IL-27. O-glycosylated. In terms of tissue distribution, expressed in macrophages and dendritic cells.

Its subcellular location is the secreted. In terms of biological role, associates with EBI3 to form the IL-27 interleukin, a heterodimeric cytokine which functions in innate immunity. IL-27 has pro- and anti-inflammatory properties, that can regulate T-helper cell development, suppress T-cell proliferation, stimulate cytotoxic T-cell activity, induce isotype switching in B-cells, and that has diverse effects on innate immune cells. Among its target cells are CD4 T-helper cells which can differentiate in type 1 effector cells (TH1), type 2 effector cells (TH2) and IL17 producing helper T-cells (TH17). It drives rapid clonal expansion of naive but not memory CD4 T-cells. It also strongly synergizes with IL-12 to trigger interferon-gamma/IFN-gamma production of naive CD4 T-cells, binds to the cytokine receptor WSX-1/TCCR which appears to be required but not sufficient for IL-27-mediated signal transduction. IL-27 potentiate the early phase of TH1 response and suppress TH2 and TH17 differentiation. It induces the differentiation of TH1 cells via two distinct pathways, p38 MAPK/TBX21- and ICAM1/ITGAL/ERK-dependent pathways. It also induces STAT1, STAT3, STAT4 and STAT5 phosphorylation and activates TBX21/T-Bet via STAT1 with resulting IL12RB2 up-regulation, an event crucial to TH1 cell commitment. It suppresses the expression of GATA3, the inhibitor TH1 cells development. In CD8 T-cells, it activates STATs as well as GZMB. IL-27 reveals to be a potent inhibitor of TH17 cell development and of IL-17 production. Indeed IL27 alone is also able to inhibit the production of IL17 by CD4 and CD8 T-cells. While IL-27 suppressed the development of pro-inflammatory Th17 cells via STAT1, it inhibits the development of anti-inflammatory inducible regulatory T-cells, iTreg, independently of STAT1. IL-27 also has an effect on cytokine production, it suppresses pro-inflammatory cytokine production such as IL2, IL4, IL5 and IL6 and activates suppressors of cytokine signaling such as SOCS1 and SOCS3. Apart from suppression of cytokine production, IL-27 also antagonizes the effects of some cytokines such as IL6 through direct effects on T-cells. Another important role of IL-27 is its antitumor activity as well as its antiangiogenic activity with activation of production of antiangiogenic chemokines such as IP-10/CXCL10 and MIG/CXCL9. In Mus musculus (Mouse), this protein is Interleukin-27 subunit alpha (Il27).